Consider the following 300-residue polypeptide: Probable ABC transporter permease protein YurM (300 aa).

The next 6 membrane-spanning stretches (helical) occupy residues 37–57, 98–118, 129–149, 161–181, 204–224, and 264–284; these read VWVFLFLYLIAIAYPLLWMVM, VIVTALTCVITVFISAWAAYG, FFLVLCLGGLMLTPQVSLVPL, TYWALILPYAAYRIPFTIILI, FGVFFRIFLPMSVPILVTSGI, and WGVLLAGLTISAAPIIILFLL. The ABC transmembrane type-1 domain occupies 94-285; sequence FMNSVIVTAL…APIIILFLLM (192 aa).

Belongs to the binding-protein-dependent transport system permease family. MalFG subfamily.

The protein resides in the cell membrane. Functionally, probably part of the binding-protein-dependent transport system YurMNO. Probably responsible for the translocation of the substrate across the membrane. This chain is Probable ABC transporter permease protein YurM (yurM), found in Bacillus subtilis (strain 168).